A 144-amino-acid chain; its full sequence is Large ribosomal subunit protein bL31c (144 aa).

Residues 1–48 (MAVSLPNSFLQISPCVPSLQLRKPVMAAVKGGKQSVRRSSNTVVQITC) constitute a chloroplast transit peptide.

This sequence belongs to the bacterial ribosomal protein bL31 family. Type A subfamily. In terms of assembly, part of the 50S ribosomal subunit.

It is found in the plastid. The protein resides in the chloroplast. In terms of biological role, binds the 23S rRNA. This chain is Large ribosomal subunit protein bL31c (RPL31), found in Arabidopsis thaliana (Mouse-ear cress).